Reading from the N-terminus, the 305-residue chain is MTSFWSWYVTLLSLGTIAALVWLLLATRKGQRPDSTEETVGHSYDGIEEYDNPLPRWWFMLFVGTVIFALGYLVLYPGLGNWKGILPGYEGGWTQVKEWQREMDKANEQYGPLYAKYAAMPVEEVAKDPQALKMGGRLFASNCSVCHGSDAKGAYGFPNLTDDDWLWGGEPETIKTTILHGRQAVMPGWKDVIGEEGIRNVAGYVRSLSGRDTPEGISVDIEQGQKIFAANCVVCHGPEAKGVTAMGAPNLTDNVWLYGSSFAQIQQTLRYGRNGRMPAQEAILGNDKVHLLAAYVYSLSQQPEQ.

A run of 2 helical transmembrane segments spans residues 4-24 and 57-77; these read FWSWYVTLLSLGTIAALVWLL and WWFMLFVGTVIFALGYLVLYP. Cytochrome c domains follow at residues 130-209 and 219-300; these read QALK…RSLS and VDIE…YSLS. 8 residues coordinate heme c: Cys-143, Cys-146, His-147, Met-186, Cys-232, Cys-235, His-236, and Met-277.

Component of the cbb3-type cytochrome c oxidase at least composed of CcoN, CcoO, CcoQ and CcoP. Requires heme c as cofactor.

The protein localises to the cell inner membrane. Its pathway is energy metabolism; oxidative phosphorylation. Functionally, C-type cytochrome. Part of the cbb3-type cytochrome c oxidase complex. CcoP subunit is required for transferring electrons from donor cytochrome c via its heme groups to CcoO subunit. From there, electrons are shuttled to the catalytic binuclear center of CcoN subunit where oxygen reduction takes place. The complex also functions as a proton pump. The polypeptide is Cbb3-type cytochrome c oxidase subunit CcoP2 (Stutzerimonas stutzeri (Pseudomonas stutzeri)).